Reading from the N-terminus, the 1070-residue chain is Carbamoyl phosphate synthase large chain (1070 aa).

The interval 1–399 is carboxyphosphate synthetic domain; the sequence is MPKREDIKKV…SLLKAFKSLD (399 aa). Residues R129, R169, G175, G176, E208, V210, E215, G241, V242, H243, Q284, and E296 each coordinate ATP. The ATP-grasp 1 domain maps to 133–325; the sequence is KETMLRIGEK…IARVTAKIAI (193 aa). Mg(2+) is bound by residues Q284, E296, and N298. Q284, E296, and N298 together coordinate Mn(2+). Positions 400-540 are oligomerization domain; the sequence is IDSQLGNKRW…YSTYEDTCET (141 aa). The carbamoyl phosphate synthetic domain stretch occupies residues 541-931; that stretch reads NPTDRKKILI…YKAELAADNL (391 aa). Residues 672-863 form the ATP-grasp 2 domain; sequence YVLMQKFGIL…LAKIAARVIA (192 aa). Residues R708, D747, L749, E754, G779, V780, H781, S782, Q822, and E834 each coordinate ATP. Residues Q822, E834, and N836 each coordinate Mg(2+). Mn(2+)-binding residues include Q822, E834, and N836. The MGS-like domain occupies 930–1070; the sequence is NLLPLTGKVF…INEYHKEMGL (141 aa). The allosteric domain stretch occupies residues 932 to 1070; that stretch reads LPLTGKVFLS…INEYHKEMGL (139 aa).

It belongs to the CarB family. In terms of assembly, composed of two chains; the small (or glutamine) chain promotes the hydrolysis of glutamine to ammonia, which is used by the large (or ammonia) chain to synthesize carbamoyl phosphate. Tetramer of heterodimers (alpha,beta)4. It depends on Mg(2+) as a cofactor. Mn(2+) is required as a cofactor.

It carries out the reaction hydrogencarbonate + L-glutamine + 2 ATP + H2O = carbamoyl phosphate + L-glutamate + 2 ADP + phosphate + 2 H(+). The enzyme catalyses hydrogencarbonate + NH4(+) + 2 ATP = carbamoyl phosphate + 2 ADP + phosphate + 2 H(+). Its pathway is amino-acid biosynthesis; L-arginine biosynthesis; carbamoyl phosphate from bicarbonate: step 1/1. It functions in the pathway pyrimidine metabolism; UMP biosynthesis via de novo pathway; (S)-dihydroorotate from bicarbonate: step 1/3. In terms of biological role, large subunit of the glutamine-dependent carbamoyl phosphate synthetase (CPSase). CPSase catalyzes the formation of carbamoyl phosphate from the ammonia moiety of glutamine, carbonate, and phosphate donated by ATP, constituting the first step of 2 biosynthetic pathways, one leading to arginine and/or urea and the other to pyrimidine nucleotides. The large subunit (synthetase) binds the substrates ammonia (free or transferred from glutamine from the small subunit), hydrogencarbonate and ATP and carries out an ATP-coupled ligase reaction, activating hydrogencarbonate by forming carboxy phosphate which reacts with ammonia to form carbamoyl phosphate. In Methanosarcina acetivorans (strain ATCC 35395 / DSM 2834 / JCM 12185 / C2A), this protein is Carbamoyl phosphate synthase large chain.